A 367-amino-acid polypeptide reads, in one-letter code: TATA-box-binding protein-like (367 aa).

Positions 1 to 26 (MKKQSKTHKVDYKYYNSGSKTSRNRN) are disordered. The segment covering 16 to 26 (NSGSKTSRNRN) has biased composition (polar residues).

It belongs to the TBP family.

The chain is TATA-box-binding protein-like from Acanthamoeba polyphaga (Amoeba).